We begin with the raw amino-acid sequence, 256 residues long: Ubiquinone/menaquinone biosynthesis C-methyltransferase UbiE (256 aa).

Residues threonine 79, aspartate 100, and 128–129 (DA) each bind S-adenosyl-L-methionine.

Belongs to the class I-like SAM-binding methyltransferase superfamily. MenG/UbiE family.

It catalyses the reaction a 2-demethylmenaquinol + S-adenosyl-L-methionine = a menaquinol + S-adenosyl-L-homocysteine + H(+). The catalysed reaction is a 2-methoxy-6-(all-trans-polyprenyl)benzene-1,4-diol + S-adenosyl-L-methionine = a 5-methoxy-2-methyl-3-(all-trans-polyprenyl)benzene-1,4-diol + S-adenosyl-L-homocysteine + H(+). It functions in the pathway quinol/quinone metabolism; menaquinone biosynthesis; menaquinol from 1,4-dihydroxy-2-naphthoate: step 2/2. Its pathway is cofactor biosynthesis; ubiquinone biosynthesis. In terms of biological role, methyltransferase required for the conversion of demethylmenaquinol (DMKH2) to menaquinol (MKH2) and the conversion of 2-polyprenyl-6-methoxy-1,4-benzoquinol (DDMQH2) to 2-polyprenyl-3-methyl-6-methoxy-1,4-benzoquinol (DMQH2). The polypeptide is Ubiquinone/menaquinone biosynthesis C-methyltransferase UbiE (Stutzerimonas stutzeri (strain A1501) (Pseudomonas stutzeri)).